A 306-amino-acid polypeptide reads, in one-letter code: Pantothenate kinase (306 aa).

91–98 (GSVAVGKS) serves as a coordination point for ATP.

It belongs to the prokaryotic pantothenate kinase family.

The protein localises to the cytoplasm. It catalyses the reaction (R)-pantothenate + ATP = (R)-4'-phosphopantothenate + ADP + H(+). It functions in the pathway cofactor biosynthesis; coenzyme A biosynthesis; CoA from (R)-pantothenate: step 1/5. The protein is Pantothenate kinase of Streptococcus thermophilus (strain ATCC BAA-491 / LMD-9).